A 606-amino-acid polypeptide reads, in one-letter code: MWMTPKRIRMEVDEALVFRPEWTQRYLVVEPAEGDGALCLVCRRLVASTRERDVRRHYEAEHEFYERFVGDEERAALVERLRQGDMSLAAVLTPEERATRAGLGLCRFLALKGRGWGEGDFVHQCMEVLLREVLPDHVGVLEGIDLSPEITRQRILSIDSNLRSQLFNRARDFKAYSLALDDQAFVAYENYLLVFIRGVGRDLEVQEDLLTIINLTHHFSVGALMSAILEALQTAGLSLQRMVGLTTTHTLRMIGENSGLVSYMREKAVSPNCWNVIHYSGFLHLELLSSYDVDINQIINTISEWVVMIKTRGVRRPEFQPLLTESESEHGERVNGRCLNNWLRRGKTLKLIFSLRKEIEAFLVSVGATTVHFSDKQWLCDFGFLVDIMDYLREISEELQISKVFAAAAFERICTFEGKLSSLQRHMEEVNLTDFPAFSIIVDELKQQFKEDQKIFDPDRYQMVISRLQKDFERHFKDLRFIKKDLELFSNPFSFKPEYAPISVRVELTKLQANTDLWNEYRVKDLGQFYAGLSGEAYPIIKGVAYKVASLFDSNQICDKAFAYLTRNQHTLSQPLTDEHLQALFRVATTEMDPRWDDLVRERNDS.

At Ser147 the chain carries Phosphoserine.

As to quaternary structure, interacts with EPM2A.

It is found in the endoplasmic reticulum. The polypeptide is EPM2A-interacting protein 1 (Epm2aip1) (Mus musculus (Mouse)).